The primary structure comprises 31 residues: Photosystem II reaction center protein T (31 aa).

The helical transmembrane segment at 3–23 threads the bilayer; sequence ALVYVFLLTGTLMVIFFAIFF.

Belongs to the PsbT family. PSII is composed of 1 copy each of membrane proteins PsbA, PsbB, PsbC, PsbD, PsbE, PsbF, PsbH, PsbI, PsbJ, PsbK, PsbL, PsbM, PsbT, PsbX, PsbY, PsbZ, Psb30/Ycf12, at least 3 peripheral proteins of the oxygen-evolving complex and a large number of cofactors. It forms dimeric complexes.

Its subcellular location is the plastid. It is found in the chloroplast thylakoid membrane. Found at the monomer-monomer interface of the photosystem II (PS II) dimer, plays a role in assembly and dimerization of PSII. PSII is a light-driven water plastoquinone oxidoreductase, using light energy to abstract electrons from H(2)O, generating a proton gradient subsequently used for ATP formation. The protein is Photosystem II reaction center protein T of Pyropia yezoensis (Susabi-nori).